Reading from the N-terminus, the 231-residue chain is Transmembrane gamma-carboxyglutamic acid protein 3 (231 aa).

Positions 1–19 are excised as a propeptide; sequence MAVFLEAKNAHAVLKRFPR. Positions 20 to 65 constitute a Gla domain; the sequence is ANEFLEELRQGTIERECMEEICSYEEVKEVFENKEKTMEFWKGYPN. Residues 20-78 are Extracellular-facing; that stretch reads ANEFLEELRQGTIERECMEEICSYEEVKEVFENKEKTMEFWKGYPNAVYSVRDPSQSSD. 4-carboxyglutamate occurs at positions 22, 25, 26, 33, 35, 38, 39, 44, 45, 48, 51, 54, and 58. An intrachain disulfide couples C36 to C41. Residues 79-101 form a helical membrane-spanning segment; sequence AMYVVVPLLGVVLLIVIALFIIW. Residues 102–231 are Cytoplasmic-facing; it reads RCQLQKATRH…IVAASPSADK (130 aa). Disordered stretches follow at residues 140–165 and 184–231; these read HSQG…SRGG and RLSS…SADK. The segment covering 201 to 212 has biased composition (polar residues); the sequence is QEGSSEEASVSY.

In terms of processing, gla residues are produced after subsequent post-translational modifications of glutamate by a vitamin K-dependent gamma-carboxylase.

It localises to the membrane. The chain is Transmembrane gamma-carboxyglutamic acid protein 3 (Prrg3) from Mus musculus (Mouse).